The sequence spans 201 residues: Holliday junction branch migration complex subunit RuvA (201 aa).

Residues Met1–Ala63 form a domain I region. Residues Asp64–Ser142 are domain II. The interval Ala143–Ser151 is flexible linker. The segment at Ala152–Leu201 is domain III.

The protein belongs to the RuvA family. Homotetramer. Forms an RuvA(8)-RuvB(12)-Holliday junction (HJ) complex. HJ DNA is sandwiched between 2 RuvA tetramers; dsDNA enters through RuvA and exits via RuvB. An RuvB hexamer assembles on each DNA strand where it exits the tetramer. Each RuvB hexamer is contacted by two RuvA subunits (via domain III) on 2 adjacent RuvB subunits; this complex drives branch migration. In the full resolvosome a probable DNA-RuvA(4)-RuvB(12)-RuvC(2) complex forms which resolves the HJ.

The protein resides in the cytoplasm. Functionally, the RuvA-RuvB-RuvC complex processes Holliday junction (HJ) DNA during genetic recombination and DNA repair, while the RuvA-RuvB complex plays an important role in the rescue of blocked DNA replication forks via replication fork reversal (RFR). RuvA specifically binds to HJ cruciform DNA, conferring on it an open structure. The RuvB hexamer acts as an ATP-dependent pump, pulling dsDNA into and through the RuvAB complex. HJ branch migration allows RuvC to scan DNA until it finds its consensus sequence, where it cleaves and resolves the cruciform DNA. In Bacteroides thetaiotaomicron (strain ATCC 29148 / DSM 2079 / JCM 5827 / CCUG 10774 / NCTC 10582 / VPI-5482 / E50), this protein is Holliday junction branch migration complex subunit RuvA.